Here is a 315-residue protein sequence, read N- to C-terminus: MSFSLKVKNEVCKHVEVNKQEAIAELSAIMKVSGTLLFTNKQFNFKITTENAAIARLVFKILKEHFGIHTEIMIKKNNSLKKNNIYIILISEEEGVKSLLKEVGIIKETINVFSLDYNIPKSIIECDECRRAYIRGAFLGGGSISNPEKTYHLEFVTHNEEYAKDLSNLINSYNLNSKVIKRKNSYIIYLKEGEQIVDLLNIIGAHASLLELENVRIMKEMRNNVNRLVNCETANLSKTVNAAVRQVESIKFIEREIGLGRLPKNLRDVAELRIKYPDESLRELGKMLNPPVGKSGVNHRLRRIEKIADELKQGI.

Residues 280-313 constitute a DNA-binding region (H-T-H motif); the sequence is SLRELGKMLNPPVGKSGVNHRLRRIEKIADELKQ.

This sequence belongs to the WhiA family.

Its function is as follows. Involved in cell division and chromosome segregation. This chain is Probable cell division protein WhiA, found in Clostridium botulinum (strain ATCC 19397 / Type A).